The chain runs to 471 residues: ATP synthase subunit beta (471 aa).

152–159 (GGAGVGKT) contacts ATP.

It belongs to the ATPase alpha/beta chains family. In terms of assembly, F-type ATPases have 2 components, CF(1) - the catalytic core - and CF(0) - the membrane proton channel. CF(1) has five subunits: alpha(3), beta(3), gamma(1), delta(1), epsilon(1). CF(0) has three main subunits: a(1), b(2) and c(9-12). The alpha and beta chains form an alternating ring which encloses part of the gamma chain. CF(1) is attached to CF(0) by a central stalk formed by the gamma and epsilon chains, while a peripheral stalk is formed by the delta and b chains.

It localises to the cell membrane. The enzyme catalyses ATP + H2O + 4 H(+)(in) = ADP + phosphate + 5 H(+)(out). Functionally, produces ATP from ADP in the presence of a proton gradient across the membrane. The catalytic sites are hosted primarily by the beta subunits. This chain is ATP synthase subunit beta, found in Herpetosiphon aurantiacus (strain ATCC 23779 / DSM 785 / 114-95).